A 342-amino-acid chain; its full sequence is Protein rough sheath 2 homolog (342 aa).

2 consecutive HTH myb-type domains span residues 1 to 58 (MQPP…KNYL) and 59 to 113 (RPGI…EKQQ). DNA-binding regions (H-T-H motif) lie at residues 32–58 (WSLV…KNYL) and 86–109 (WKKI…EVFK). A coiled-coil region spans residues 253–304 (RRREATEEFEAKMRALREEQAAAVERVEAEYREKMAGLRRDAEAKEQKMAEQ).

It localises to the nucleus. Transcription factor required for normal cell differentiation. May interact with other proteins to repress the knox homeobox genes. The protein is Protein rough sheath 2 homolog (RS2) of Oryza sativa subsp. japonica (Rice).